The primary structure comprises 236 residues: Small ribosomal subunit protein uS2c (236 aa).

The protein belongs to the universal ribosomal protein uS2 family.

It localises to the plastid. The protein resides in the chloroplast. This is Small ribosomal subunit protein uS2c (rps2) from Oenothera biennis (German evening primrose).